Reading from the N-terminus, the 416-residue chain is Homogentisate 1,2-dioxygenase (416 aa).

Catalysis depends on His-275, which acts as the Proton acceptor. 2 residues coordinate Fe cation: His-318 and Glu-324. Homogentisate contacts are provided by Tyr-333 and His-354. Residue His-354 coordinates Fe cation.

This sequence belongs to the homogentisate dioxygenase family. As to quaternary structure, hexamer; dimer of trimers. Fe cation serves as cofactor.

It catalyses the reaction homogentisate + O2 = 4-maleylacetoacetate + H(+). It functions in the pathway amino-acid degradation; L-phenylalanine degradation; acetoacetate and fumarate from L-phenylalanine: step 4/6. Its function is as follows. Involved in the catabolism of homogentisate (2,5-dihydroxyphenylacetate or 2,5-OH-PhAc), a central intermediate in the degradation of phenylalanine and tyrosine. Catalyzes the oxidative ring cleavage of the aromatic ring of homogentisate to yield maleylacetoacetate. The sequence is that of Homogentisate 1,2-dioxygenase from Legionella pneumophila (strain Lens).